A 431-amino-acid chain; its full sequence is Methionine aminopeptidase 2-2 (431 aa).

Residues 1-76 are disordered; the sequence is MAAQASEKLQ…PPRVPLSTLF (76 aa). The span at 35–47 shows a compositional bias: acidic residues; the sequence is EAEDDSDDDEVED. Histidine 184 serves as a coordination point for substrate. A divalent metal cation contacts are provided by aspartate 204, aspartate 215, and histidine 284. Histidine 292 contributes to the substrate binding site. 2 residues coordinate a divalent metal cation: glutamate 317 and glutamate 412.

The protein belongs to the peptidase M24A family. Methionine aminopeptidase eukaryotic type 2 subfamily. It depends on Co(2+) as a cofactor. Zn(2+) is required as a cofactor. Requires Mn(2+) as cofactor. Fe(2+) serves as cofactor.

The protein resides in the cytoplasm. The catalysed reaction is Release of N-terminal amino acids, preferentially methionine, from peptides and arylamides.. In terms of biological role, cotranslationally removes the N-terminal methionine from nascent proteins. The N-terminal methionine is often cleaved when the second residue in the primary sequence is small and uncharged (Met-Ala-, Cys, Gly, Pro, Ser, Thr, or Val). The polypeptide is Methionine aminopeptidase 2-2 (Aspergillus niger (strain ATCC MYA-4892 / CBS 513.88 / FGSC A1513)).